A 147-amino-acid polypeptide reads, in one-letter code: Hemoglobin subunit beta-1 (147 aa).

At Ser2 the chain carries N-acetylserine. The region spanning 3–147 (FLSAEEKGLV…VASALAHRYH (145 aa)) is the Globin domain. Lys18 carries the N6-succinyllysine modification. Ser45 and Ser51 each carry phosphoserine. The residue at position 60 (Lys60) is an N6-succinyllysine. 2 residues coordinate heme b: His64 and His93. Asymmetric dimethylarginine is present on Arg105.

This sequence belongs to the globin family. Heterotetramer of two alpha chains and two beta chains. In terms of tissue distribution, red blood cells.

Involved in oxygen transport from the lung to the various peripheral tissues. In Panthera onca (Jaguar), this protein is Hemoglobin subunit beta-1 (HBB1).